The chain runs to 188 residues: MATVSTNEFKGGLKLMIDSEPCVILENEYVKPGKGQAFNRVKIRKLLSGKVLEKTFKSGDTCEVADVMDIDLDYLYSDGEFYHFMNNETFEQIAADAKAVGENVKWLVENNTCMLTLWNGNPIAVTPPNFVELEVIETDPGLKGDTQGTGGKPATLSTGAVVRVPLFIQIGEVIKVDTRSSEYVGRVK.

Lys34 is subject to N6-(3,6-diaminohexanoyl)-5-hydroxylysine.

Belongs to the elongation factor P family. May be beta-lysylated on the epsilon-amino group of Lys-34 by the combined action of EpmA and EpmB, and then hydroxylated on the C5 position of the same residue by EpmC (if this protein is present). Lysylation is critical for the stimulatory effect of EF-P on peptide-bond formation. The lysylation moiety may extend toward the peptidyltransferase center and stabilize the terminal 3-CCA end of the tRNA. Hydroxylation of the C5 position on Lys-34 may allow additional potential stabilizing hydrogen-bond interactions with the P-tRNA.

The protein localises to the cytoplasm. It participates in protein biosynthesis; polypeptide chain elongation. Its function is as follows. Involved in peptide bond synthesis. Alleviates ribosome stalling that occurs when 3 or more consecutive Pro residues or the sequence PPG is present in a protein, possibly by augmenting the peptidyl transferase activity of the ribosome. Modification of Lys-34 is required for alleviation. This is Elongation factor P from Vibrio vulnificus (strain CMCP6).